An 881-amino-acid polypeptide reads, in one-letter code: Dynamin-like GTPase MGM1, mitochondrial (881 aa).

A mitochondrion-targeting transit peptide spans M1–S59. At I60–R72 the chain is on the mitochondrial matrix side. Residues L73 to M92 form a helical; Signal-anchor for type II membrane protein membrane-spanning segment. Over E93–L881 the chain is Mitochondrial intermembrane. The segment at A145 to E183 is disordered. Acidic residues predominate over residues K160–S176. Positions H207–E505 constitute a Dynamin-type G domain. The interval G217 to S224 is G1 motif. GTP contacts are provided by S220, S221, G222, K223, S224, S225, and G239. S224 provides a ligand contact to Mg(2+). Residues V243–R245 form a G2 motif region. T244 and D317 together coordinate Mg(2+). A G3 motif region spans residues D317–G320. Residues T385–D388 are G4 motif. GTP-binding residues include K386, D388, and T415. The segment at I414–T417 is G5 motif. Positions S668–T780 are paddle region. C777 and C786 are oxidised to a cystine. In terms of domain architecture, GED spans T780–K872.

The protein belongs to the TRAFAC class dynamin-like GTPase superfamily. Dynamin/Fzo/YdjA family. In terms of assembly, oligomeric complex consisting of membrane-bound and soluble forms of MGM1. Associates with FZO1 through interaction with the intermembrane space domain of UGO1 which binds FZO1 through its cytoplasmic domain. Post-translationally, cleavage of the transit peptide by mitochondrial processing protease (MPP) produces a long integral membrane form of MGM1 (l-MGM1). Further processing by the rhomboid protease PCP1 produces a short peripheral membrane form of MGM1 (s-MGM1). Both isoforms are required for full activity.

It is found in the mitochondrion inner membrane. It localises to the mitochondrion intermembrane space. It carries out the reaction GTP + H2O = GDP + phosphate + H(+). Dynamin-related GTPase that is essential for normal mitochondrial morphology by mediating fusion of the mitochondrial inner membranes, regulating cristae morphology and maintaining respiratory chain function. Exists in two forms: the transmembrane, long form (Dynamin-like GTPase MGM1, long form; L-MGM1), which is tethered to the inner mitochondrial membrane, and the short soluble form (Dynamin-like GTPase MGM1, short form; S-MGM1), which results from proteolytic cleavage and localizes in the intermembrane space. Both forms (L-MGM1 and S-MGM1) cooperate to catalyze the fusion of the mitochondrial inner membrane. The equilibrium between L-MGM1 and S-MGM1 is essential: excess levels of S-MGM1, following loss of mitochondrial membrane potential, lead to an impaired equilibrium between L-MGM1 and S-MGM1, inhibiting mitochondrial fusion. Plays a role in the maintenance and remodeling of mitochondrial cristae, some invaginations of the mitochondrial inner membrane that provide an increase in the surface area. Probably acts by forming helical filaments at the inside of inner membrane tubes with the shape and dimensions of crista junctions. In terms of biological role, constitutes the transmembrane long form (L-MGM1) that plays a central role in mitochondrial inner membrane fusion and cristae morphology. L-MGM1 and the soluble short form (S-MGM1) form higher-order helical assemblies that coordinate the fusion of mitochondrial inner membranes. Inner membrane-anchored L-MGM1 molecules initiate membrane remodeling by recruiting soluble S-MGM1 to rapidly polymerize into a flexible cylindrical scaffold encaging the mitochondrial inner membrane. Once at the membrane surface, the formation of S-MGM1 helices induce bilayer curvature. MGM1 dimerization through the paddle region, which inserts into cardiolipin-containing membrane, promotes GTP hydrolysis and the helical assembly of a flexible MGM1 lattice on the membrane, which drives membrane curvature and mitochondrial fusion. Its function is as follows. Constitutes the soluble short form (S-MGM1) generated by cleavage by PCP1, which plays a central role in mitochondrial inner membrane fusion and cristae morphology. The transmembrane long form (L-MGM1) and the S-MGM1 form higher-order helical assemblies that coordinate the fusion of mitochondrial inner membranes. Inner membrane-anchored L-MGM1 molecules initiate membrane remodeling by recruiting soluble S-MGM1 to rapidly polymerize into a flexible cylindrical scaffold encaging the mitochondrial inner membrane. Once at the membrane surface, the formation of S-MGM1 helices induce bilayer curvature. MGM1 dimerization through the paddle region, which inserts into cardiolipin-containing membrane, promotes GTP hydrolysis and the helical assembly of a flexible MGM1 lattice on the membrane, which drives membrane curvature and mitochondrial fusion. Excess levels of S-MGM1 produced by cleavage by PCP1 following stress conditions that induce loss of mitochondrial membrane potential, lead to an impaired equilibrium between L-MGM1 and S-MGM1, thereby inhibiting mitochondrial fusion. The sequence is that of Dynamin-like GTPase MGM1, mitochondrial from Saccharomyces cerevisiae (strain ATCC 204508 / S288c) (Baker's yeast).